A 609-amino-acid chain; its full sequence is QWRF motif-containing protein 4 (609 aa).

Disordered regions lie at residues 1 to 227 and 271 to 369; these read MQVG…IRGN and EVSS…TAQS. Composition is skewed to polar residues over residues 11 to 21 and 46 to 57; these read GKQQQSVSDAT and EVSSRYRSPTPT. Composition is skewed to low complexity over residues 98-110 and 129-143; these read PVSD…PVSS and SLSV…SVPV. Polar residues predominate over residues 151-180; it reads VTSSTDRTLRPSSSNIAHKQQSETTSVTRK. 2 stretches are compositionally biased toward low complexity: residues 271–285 and 302–332; these read EVSS…SSTE and SAPG…PSRG. The QWRF motif signature appears at 407–410; that stretch reads QWRF. The tract at residues 588-609 is disordered; sequence EEEVRDDAESSPLLPLSKFQWP.

The protein belongs to the QWRF family.

The chain is QWRF motif-containing protein 4 (QWRF4) from Arabidopsis thaliana (Mouse-ear cress).